A 216-amino-acid chain; its full sequence is Protein Syd (216 aa).

The protein belongs to the Syd family.

It localises to the cell inner membrane. Interacts with the SecY protein in vivo. May bind preferentially to an uncomplexed state of SecY, thus functioning either as a chelating agent for excess SecY in the cell or as a regulatory factor that negatively controls the translocase function. This is Protein Syd from Shewanella baltica (strain OS195).